Here is a 275-residue protein sequence, read N- to C-terminus: Rhamnulose-1-phosphate aldolase (275 aa).

Glu117 is an active-site residue. Residues His141, His143, and His212 each coordinate Zn(2+).

Belongs to the aldolase class II family. RhaD subfamily. Homotetramer. Zn(2+) is required as a cofactor.

The protein resides in the cytoplasm. The enzyme catalyses L-rhamnulose 1-phosphate = (S)-lactaldehyde + dihydroxyacetone phosphate. It participates in carbohydrate degradation; L-rhamnose degradation; glycerone phosphate from L-rhamnose: step 3/3. Catalyzes the reversible cleavage of L-rhamnulose-1-phosphate to dihydroxyacetone phosphate (DHAP) and L-lactaldehyde. This chain is Rhamnulose-1-phosphate aldolase, found in Salmonella heidelberg (strain SL476).